Here is a 118-residue protein sequence, read N- to C-terminus: Basic phospholipase A2 1 (118 aa).

7 disulfides stabilise this stretch: Cys11–Cys72, Cys26–Cys117, Cys28–Cys44, Cys43–Cys98, Cys50–Cys91, Cys60–Cys84, and Cys78–Cys89. Tyr27, Gly29, and Gly31 together coordinate Ca(2+). His47 is a catalytic residue. Asp48 serves as a coordination point for Ca(2+). Residue Asp92 is part of the active site.

Belongs to the phospholipase A2 family. Group I subfamily. D49 sub-subfamily. Requires Ca(2+) as cofactor. Expressed by the venom gland.

It is found in the secreted. It carries out the reaction a 1,2-diacyl-sn-glycero-3-phosphocholine + H2O = a 1-acyl-sn-glycero-3-phosphocholine + a fatty acid + H(+). Its function is as follows. PLA2 catalyzes the calcium-dependent hydrolysis of the 2-acyl groups in 3-sn-phosphoglycerides. The chain is Basic phospholipase A2 1 from Naja melanoleuca (Forest cobra).